The primary structure comprises 403 residues: Protein-glutamate methylesterase/protein-glutamine glutaminase (403 aa).

A Response regulatory domain is found at 8–126; sequence AVLIVDDSAL…SAHLRTVSRK (119 aa). Asp59 is subject to 4-aspartylphosphate. One can recognise a CheB-type methylesterase domain in the interval 204–393; it reads PLRESGALQI…VSLDDMAATI (190 aa). Active-site residues include Ser219, His246, and Asp342.

It belongs to the CheB family. In terms of processing, phosphorylated by CheA. Phosphorylation of the N-terminal regulatory domain activates the methylesterase activity.

The protein resides in the cytoplasm. The catalysed reaction is [protein]-L-glutamate 5-O-methyl ester + H2O = L-glutamyl-[protein] + methanol + H(+). It carries out the reaction L-glutaminyl-[protein] + H2O = L-glutamyl-[protein] + NH4(+). Involved in chemotaxis. Part of a chemotaxis signal transduction system that modulates chemotaxis in response to various stimuli. Catalyzes the demethylation of specific methylglutamate residues introduced into the chemoreceptors (methyl-accepting chemotaxis proteins or MCP) by CheR. Also mediates the irreversible deamidation of specific glutamine residues to glutamic acid. This chain is Protein-glutamate methylesterase/protein-glutamine glutaminase, found in Treponema pallidum (strain Nichols).